The primary structure comprises 283 residues: Acetylglutamate kinase (283 aa).

Residues 64 to 65 (GG), R86, and N181 each bind substrate.

It belongs to the acetylglutamate kinase family. ArgB subfamily.

It is found in the cytoplasm. The enzyme catalyses N-acetyl-L-glutamate + ATP = N-acetyl-L-glutamyl 5-phosphate + ADP. The protein operates within amino-acid biosynthesis; L-arginine biosynthesis; N(2)-acetyl-L-ornithine from L-glutamate: step 2/4. Its function is as follows. Catalyzes the ATP-dependent phosphorylation of N-acetyl-L-glutamate. The chain is Acetylglutamate kinase from Sulfurovum sp. (strain NBC37-1).